Consider the following 181-residue polypeptide: Cytochrome P450 monooxygenase dtpC (181 aa).

Cys-125 provides a ligand contact to heme.

The protein belongs to the cytochrome P450 family. Requires heme as cofactor.

It functions in the pathway alkaloid biosynthesis. The protein operates within secondary metabolite biosynthesis. In terms of biological role, cytochrome P450 monooxygenase; part of the gene cluster that mediates the biosynthesis of the dimeric diketopiperazine alkaloid ditryptophenaline. The nonribosomal peptide synthase dtpA accepts L-tryptophan and L-phenylalanine as its substrates and forms the phenylalanyl-tryptophanyl cyclic dipeptide product cyclophenylalanyltryptophenyl. The N-methyltransferase dtpB is responsible for the N-methylation of cyclophenylalanyltryptophenyl to yield cyclo-N-methylphenylalanyltryptophenyl. The cytochrome P450 monooxygenase is responsible not only for pyrroloindole ring formation but also for concurrent dimerization of N-methylphenylalanyltryptophanyl diketopiperazine monomers into a homodimeric product. This chain is Cytochrome P450 monooxygenase dtpC, found in Aspergillus flavus (strain ATCC 200026 / FGSC A1120 / IAM 13836 / NRRL 3357 / JCM 12722 / SRRC 167).